The primary structure comprises 364 residues: Alanine racemase (364 aa).

The active-site Proton acceptor; specific for D-alanine is the Lys39. An N6-(pyridoxal phosphate)lysine modification is found at Lys39. Arg137 is a substrate binding site. The active-site Proton acceptor; specific for L-alanine is Tyr258. Met306 lines the substrate pocket.

Belongs to the alanine racemase family. It depends on pyridoxal 5'-phosphate as a cofactor.

The catalysed reaction is L-alanine = D-alanine. It functions in the pathway amino-acid biosynthesis; D-alanine biosynthesis; D-alanine from L-alanine: step 1/1. Its function is as follows. Catalyzes the interconversion of L-alanine and D-alanine. May also act on other amino acids. The sequence is that of Alanine racemase (alr) from Methylobacterium sp. (strain 4-46).